A 293-amino-acid polypeptide reads, in one-letter code: MPLIIPENIPAYELLKEHAFIMGLRRAKHQDIRPQEILIVNLMPKKIETENQILSLLANSPLQVNITLLATTSYVGKNTPFTHLEKFYKGLEEVKKHKFDGAIVTGAPVEQMDFEKVAYWEELLEIFDFLKQNVTSSMYICWGAMAALKYFYGVDKISLDKKIFGVYKHDKVSPDLLLTNLDEKVLMPHSRHSSMDEEQILALQKQGKLKILLRNKKIGSALLRDEKNIFILGHLEYFKETLHQEYVRDNFIQKAKNYYDKKGNIKYNWRSNANTIFANWLNYDVYQSTPFVL.

Catalysis depends on Cys-141, which acts as the Acyl-thioester intermediate. The substrate site is built by Lys-162 and Ser-190. Residue His-234 is the Proton acceptor of the active site. Residue Glu-236 is part of the active site. Arg-248 serves as a coordination point for substrate.

It belongs to the MetA family.

The protein resides in the cytoplasm. It carries out the reaction L-homoserine + acetyl-CoA = O-acetyl-L-homoserine + CoA. Its pathway is amino-acid biosynthesis; L-methionine biosynthesis via de novo pathway; O-acetyl-L-homoserine from L-homoserine: step 1/1. Its function is as follows. Transfers an acetyl group from acetyl-CoA to L-homoserine, forming acetyl-L-homoserine. The polypeptide is Homoserine O-acetyltransferase (Campylobacter jejuni subsp. jejuni serotype O:2 (strain ATCC 700819 / NCTC 11168)).